A 375-amino-acid chain; its full sequence is Alcohol dehydrogenase 1A (375 aa).

At Ser-2 the chain carries N-acetylserine. A Phosphoserine modification is found at Ser-23. Cys-47 lines the Zn(2+) pocket. 48–52 (GTDDH) contributes to the NAD(+) binding site. Positions 68, 98, 101, 104, 112, and 175 each coordinate Zn(2+). NAD(+)-binding positions include 200-205 (GLGGVG), Asp-224, Lys-229, Ile-270, 293-295 (VGV), 318-320 (AVL), and Arg-370.

Belongs to the zinc-containing alcohol dehydrogenase family. As to quaternary structure, dimer of identical or heterodimer of closely related subunits alpha, beta, or gamma that are encoded by genes ADH1A, ADH1B, and ADH1C, respectively. It depends on Zn(2+) as a cofactor.

It localises to the cytoplasm. It catalyses the reaction a primary alcohol + NAD(+) = an aldehyde + NADH + H(+). The enzyme catalyses a secondary alcohol + NAD(+) = a ketone + NADH + H(+). The catalysed reaction is butan-1-ol + NAD(+) = butanal + NADH + H(+). It carries out the reaction 1-propanol + NAD(+) = propanal + NADH + H(+). Alcohol dehydrogenase. Oxidizes primary as well as secondary alcohols. Ethanol is a very poor substrate. The sequence is that of Alcohol dehydrogenase 1A (ADH1A) from Pongo abelii (Sumatran orangutan).